The chain runs to 920 residues: Protein FAN (920 aa).

A GRAM domain is found at 176–247 (RLARTSFDKN…QDVRRIYKRR (72 aa)). A BEACH-type PH domain is found at 189–286 (SVSEKLHMEC…DRDDLYFYIA (98 aa)). The region spanning 290–575 (EHHAAEHTAE…QLFVTPHPRR (286 aa)) is the BEACH domain. 6 WD repeats span residues 631 to 661 (IHKEAVTGIAVSCNGSSVFTTSQDSTLKMFS), 673 to 703 (FSNMALSSCLLLPGDTTVISSSWDNNVYFYS), 715 to 743 (GHDDAVSKICWHNDRLYSGSWDSTVKVWS), 764 to 794 (EHDVSVNTINLNAVSTLLVSGTKEGMVNIWD), 806 to 836 (CHSGTVCDAAFSPDSRHILSTGVDGCLNVID), and 887 to 917 (GHTGAVTCMWMNEQCSSIITGGEDRQIMFWK).

Functionally, couples the p55 TNF-receptor (TNF-R55 / TNFR1) to neutral sphingomyelinase (N-SMASE). Specifically binds to the N-smase activation domain of TNF-R55. May regulate ceramide production by N-SMASE. This is Protein FAN (Nsmaf) from Mus musculus (Mouse).